Here is a 152-residue protein sequence, read N- to C-terminus: Large ribosomal subunit protein uL30 (152 aa).

The protein belongs to the universal ribosomal protein uL30 family. In terms of assembly, part of the 50S ribosomal subunit.

The chain is Large ribosomal subunit protein uL30 from Archaeoglobus fulgidus (strain ATCC 49558 / DSM 4304 / JCM 9628 / NBRC 100126 / VC-16).